A 379-amino-acid polypeptide reads, in one-letter code: Lipoyl synthase 2, mitochondrial (379 aa).

Residues cysteine 106, cysteine 111, cysteine 117, cysteine 137, cysteine 141, cysteine 144, and serine 352 each contribute to the [4Fe-4S] cluster site. Residues 122–341 (EHGTQTATIM…EERGNELGFL (220 aa)) form the Radical SAM core domain.

The protein belongs to the radical SAM superfamily. Lipoyl synthase family. [4Fe-4S] cluster is required as a cofactor.

It localises to the mitochondrion. It catalyses the reaction [[Fe-S] cluster scaffold protein carrying a second [4Fe-4S](2+) cluster] + N(6)-octanoyl-L-lysyl-[protein] + 2 oxidized [2Fe-2S]-[ferredoxin] + 2 S-adenosyl-L-methionine + 4 H(+) = [[Fe-S] cluster scaffold protein] + N(6)-[(R)-dihydrolipoyl]-L-lysyl-[protein] + 4 Fe(3+) + 2 hydrogen sulfide + 2 5'-deoxyadenosine + 2 L-methionine + 2 reduced [2Fe-2S]-[ferredoxin]. Its pathway is protein modification; protein lipoylation via endogenous pathway; protein N(6)-(lipoyl)lysine from octanoyl-[acyl-carrier-protein]: step 2/2. In terms of biological role, catalyzes the radical-mediated insertion of two sulfur atoms into the C-6 and C-8 positions of the octanoyl moiety bound to the lipoyl domains of lipoate-dependent enzymes, thereby converting the octanoylated domains into lipoylated derivatives. This is Lipoyl synthase 2, mitochondrial from Drosophila yakuba (Fruit fly).